The following is a 328-amino-acid chain: Malate dehydrogenase (328 aa).

Residue 11 to 17 participates in NAD(+) binding; the sequence is GAAGQIG. Substrate contacts are provided by Arg94 and Arg100. NAD(+)-binding positions include Asn107, Gln114, and 131-133; that span reads VGN. Residues Asn133 and Arg164 each contribute to the substrate site. The active-site Proton acceptor is the His189.

This sequence belongs to the LDH/MDH superfamily. MDH type 2 family.

It catalyses the reaction (S)-malate + NAD(+) = oxaloacetate + NADH + H(+). Functionally, catalyzes the reversible oxidation of malate to oxaloacetate. This is Malate dehydrogenase from Stenotrophomonas maltophilia (strain R551-3).